A 571-amino-acid chain; its full sequence is MDTGCLSSMNITGASQTRSFAGQLPPQRCFASSHYTSFAVKKLVSRNKGRRSHRRHPALQVVCKDFPRPPLESTINYLEAGQLSSFFRNSERPSKPLQVVVAGAGLAGLSTAKYLADAGHKPILLEARDVLGGKVAAWKDEDGDWYETGLHIFFGAYPNIQNLFGELRIEDRLQWKEHSMIFAMPNKPGEFSRFDFPETLPAPINGIWAILRNNEMLTWPEKVKFAIGLLPAMVGGQPYVEAQDGLTVSEWMKKQGVPDRVNDEVFIAMSKALNFINPDELSMQCILIALNRFLQEKHGSKMAFLDGNPPERLCMPIVDHIRSRGGEVRLNSRIKKIELNPDGTVKHFALSDGTQITGDAYVCATPVDIFKLLVPQEWSEITYFKKLEKLVGVPVINVHIWFDRKLNNTYDHLLFSRSSLLSVYADMSVTCKEYYDPNRSMLELVFAPADEWIGRSDTEIIDATMEELAKLFPDEIAADQSKAKILKYHIVKTPRSVYKTVPNCEPCRPLQRSPIEGFYLAGDYTKQKYLASMEGAVLSGKLCAQSIVQDYSRLALRSQKSLQSGEVPVPS.

A chloroplast and chromoplast-targeting transit peptide spans 1-96 (MDTGCLSSMN…FRNSERPSKP (96 aa)). FAD contacts are provided by residues A107, 126-127 (EA), K134, 151-152 (HI), and Y157. Residue R292 participates in substrate binding. FAD contacts are provided by I334 and D523. Residue A531 participates in substrate binding. Residue M533 participates in FAD binding.

It belongs to the carotenoid/retinoid oxidoreductase family. Homotetramer. FAD serves as cofactor.

It is found in the plastid. It localises to the chloroplast. Its subcellular location is the chromoplast. The protein resides in the membrane. It catalyses the reaction 2 a plastoquinone + 15-cis-phytoene = 9,9',15-tri-cis-zeta-carotene + 2 a plastoquinol. The protein operates within carotenoid biosynthesis; lycopene biosynthesis. Functionally, converts phytoene into zeta-carotene via the intermediary of phytofluene by the symmetrical introduction of two double bonds at the C-11 and C-11' positions of phytoene with a concomitant isomerization of two neighboring double bonds at the C9 and C9' positions from trans to cis. The polypeptide is 15-cis-phytoene desaturase, chloroplastic/chromoplastic (PDS1) (Zea mays (Maize)).